A 104-amino-acid chain; its full sequence is Large ribosomal subunit protein uL24 (104 aa).

It belongs to the universal ribosomal protein uL24 family. In terms of assembly, part of the 50S ribosomal subunit.

Its function is as follows. One of two assembly initiator proteins, it binds directly to the 5'-end of the 23S rRNA, where it nucleates assembly of the 50S subunit. In terms of biological role, one of the proteins that surrounds the polypeptide exit tunnel on the outside of the subunit. This Shewanella halifaxensis (strain HAW-EB4) protein is Large ribosomal subunit protein uL24.